We begin with the raw amino-acid sequence, 286 residues long: 33 kDa chaperonin (286 aa).

2 disulfides stabilise this stretch: cysteine 225–cysteine 227 and cysteine 258–cysteine 261.

Belongs to the HSP33 family. Post-translationally, under oxidizing conditions two disulfide bonds are formed involving the reactive cysteines. Under reducing conditions zinc is bound to the reactive cysteines and the protein is inactive.

The protein localises to the cytoplasm. Redox regulated molecular chaperone. Protects both thermally unfolding and oxidatively damaged proteins from irreversible aggregation. Plays an important role in the bacterial defense system toward oxidative stress. The protein is 33 kDa chaperonin of Shewanella sediminis (strain HAW-EB3).